The sequence spans 386 residues: Flap endonuclease 1 (386 aa).

Positions Met1–Arg104 are N-domain. Residue Asp34 participates in Mg(2+) binding. DNA contacts are provided by Arg47 and Arg70. Positions 86, 158, 160, 179, and 181 each coordinate Mg(2+). Positions Glu122 to Tyr253 are I-domain. Residue Glu158 participates in DNA binding. Residues Gly231 and Asp233 each coordinate DNA. Asp233 contributes to the Mg(2+) binding site. Residues Thr336–Phe344 are interaction with PCNA. The tract at residues Pro351–Lys386 is disordered.

It belongs to the XPG/RAD2 endonuclease family. FEN1 subfamily. Interacts with PCNA. Three molecules of FEN1 bind to one PCNA trimer with each molecule binding to one PCNA monomer. PCNA stimulates the nuclease activity without altering cleavage specificity. The cofactor is Mg(2+). Post-translationally, phosphorylated. Phosphorylation upon DNA damage induces relocalization to the nuclear plasma.

It is found in the nucleus. The protein resides in the nucleolus. It localises to the nucleoplasm. The protein localises to the mitochondrion. Functionally, structure-specific nuclease with 5'-flap endonuclease and 5'-3' exonuclease activities involved in DNA replication and repair. During DNA replication, cleaves the 5'-overhanging flap structure that is generated by displacement synthesis when DNA polymerase encounters the 5'-end of a downstream Okazaki fragment. It enters the flap from the 5'-end and then tracks to cleave the flap base, leaving a nick for ligation. Also involved in the long patch base excision repair (LP-BER) pathway, by cleaving within the apurinic/apyrimidinic (AP) site-terminated flap. Acts as a genome stabilization factor that prevents flaps from equilibrating into structures that lead to duplications and deletions. Also possesses 5'-3' exonuclease activity on nicked or gapped double-stranded DNA, and exhibits RNase H activity. Also involved in replication and repair of rDNA and in repairing mitochondrial DNA. This Drosophila persimilis (Fruit fly) protein is Flap endonuclease 1.